The chain runs to 344 residues: Holliday junction branch migration complex subunit RuvB (344 aa).

The segment at 1 to 183 is large ATPase domain (RuvB-L); sequence MLDERLISSH…FGISCRLDFY (183 aa). ATP contacts are provided by residues Ile22, Arg23, Gly64, Lys67, Thr68, Thr69, 130–132, Arg173, Tyr183, and Arg220; that span reads EDY. Thr68 provides a ligand contact to Mg(2+). Positions 184 to 254 are small ATPAse domain (RuvB-S); sequence TPLELSEIIL…LAKWALEMLE (71 aa). A head domain (RuvB-H) region spans residues 257 to 344; the sequence is ECGLDVMDRM…LEGKGLFSDA (88 aa). DNA-binding residues include Lys312 and Arg317.

It belongs to the RuvB family. In terms of assembly, homohexamer. Forms an RuvA(8)-RuvB(12)-Holliday junction (HJ) complex. HJ DNA is sandwiched between 2 RuvA tetramers; dsDNA enters through RuvA and exits via RuvB. An RuvB hexamer assembles on each DNA strand where it exits the tetramer. Each RuvB hexamer is contacted by two RuvA subunits (via domain III) on 2 adjacent RuvB subunits; this complex drives branch migration. In the full resolvosome a probable DNA-RuvA(4)-RuvB(12)-RuvC(2) complex forms which resolves the HJ.

It is found in the cytoplasm. It catalyses the reaction ATP + H2O = ADP + phosphate + H(+). Its function is as follows. The RuvA-RuvB-RuvC complex processes Holliday junction (HJ) DNA during genetic recombination and DNA repair, while the RuvA-RuvB complex plays an important role in the rescue of blocked DNA replication forks via replication fork reversal (RFR). RuvA specifically binds to HJ cruciform DNA, conferring on it an open structure. The RuvB hexamer acts as an ATP-dependent pump, pulling dsDNA into and through the RuvAB complex. RuvB forms 2 homohexamers on either side of HJ DNA bound by 1 or 2 RuvA tetramers; 4 subunits per hexamer contact DNA at a time. Coordinated motions by a converter formed by DNA-disengaged RuvB subunits stimulates ATP hydrolysis and nucleotide exchange. Immobilization of the converter enables RuvB to convert the ATP-contained energy into a lever motion, pulling 2 nucleotides of DNA out of the RuvA tetramer per ATP hydrolyzed, thus driving DNA branch migration. The RuvB motors rotate together with the DNA substrate, which together with the progressing nucleotide cycle form the mechanistic basis for DNA recombination by continuous HJ branch migration. Branch migration allows RuvC to scan DNA until it finds its consensus sequence, where it cleaves and resolves cruciform DNA. This Syntrophomonas wolfei subsp. wolfei (strain DSM 2245B / Goettingen) protein is Holliday junction branch migration complex subunit RuvB.